The following is a 257-amino-acid chain: Pantothenate synthetase (257 aa).

29 to 36 (MGNLHAGH) lines the ATP pocket. The active-site Proton donor is His36. Residue Gln60 coordinates (R)-pantoate. Gln60 is a binding site for beta-alanine. 145–148 (GEKD) provides a ligand contact to ATP. Gln151 lines the (R)-pantoate pocket. Residues Val174 and 182 to 185 (LSSR) contribute to the ATP site.

Belongs to the pantothenate synthetase family. In terms of assembly, homodimer.

It localises to the cytoplasm. The catalysed reaction is (R)-pantoate + beta-alanine + ATP = (R)-pantothenate + AMP + diphosphate + H(+). It participates in cofactor biosynthesis; (R)-pantothenate biosynthesis; (R)-pantothenate from (R)-pantoate and beta-alanine: step 1/1. Catalyzes the condensation of pantoate with beta-alanine in an ATP-dependent reaction via a pantoyl-adenylate intermediate. This chain is Pantothenate synthetase, found in Coxiella burnetii (strain Dugway 5J108-111).